A 278-amino-acid chain; its full sequence is Ribosomal RNA small subunit methyltransferase A (278 aa).

Asn27, Leu29, Gly54, Glu75, Asp95, and Asn118 together coordinate S-adenosyl-L-methionine.

It belongs to the class I-like SAM-binding methyltransferase superfamily. rRNA adenine N(6)-methyltransferase family. RsmA subfamily.

The protein resides in the cytoplasm. The catalysed reaction is adenosine(1518)/adenosine(1519) in 16S rRNA + 4 S-adenosyl-L-methionine = N(6)-dimethyladenosine(1518)/N(6)-dimethyladenosine(1519) in 16S rRNA + 4 S-adenosyl-L-homocysteine + 4 H(+). Its function is as follows. Specifically dimethylates two adjacent adenosines (A1518 and A1519) in the loop of a conserved hairpin near the 3'-end of 16S rRNA in the 30S particle. May play a critical role in biogenesis of 30S subunits. The chain is Ribosomal RNA small subunit methyltransferase A from Chlamydia abortus (strain DSM 27085 / S26/3) (Chlamydophila abortus).